The sequence spans 227 residues: Phosphatidylserine decarboxylase proenzyme (227 aa).

The active-site Schiff-base intermediate with substrate; via pyruvic acid is the Ser-184. Ser-184 is subject to Pyruvic acid (Ser); by autocatalysis.

This sequence belongs to the phosphatidylserine decarboxylase family. PSD-A subfamily. Heterodimer of a large membrane-associated beta subunit and a small pyruvoyl-containing alpha subunit. The cofactor is pyruvate. Post-translationally, is synthesized initially as an inactive proenzyme. Formation of the active enzyme involves a self-maturation process in which the active site pyruvoyl group is generated from an internal serine residue via an autocatalytic post-translational modification. Two non-identical subunits are generated from the proenzyme in this reaction, and the pyruvate is formed at the N-terminus of the alpha chain, which is derived from the carboxyl end of the proenzyme. The post-translation cleavage follows an unusual pathway, termed non-hydrolytic serinolysis, in which the side chain hydroxyl group of the serine supplies its oxygen atom to form the C-terminus of the beta chain, while the remainder of the serine residue undergoes an oxidative deamination to produce ammonia and the pyruvoyl prosthetic group on the alpha chain.

Its subcellular location is the cell membrane. It catalyses the reaction a 1,2-diacyl-sn-glycero-3-phospho-L-serine + H(+) = a 1,2-diacyl-sn-glycero-3-phosphoethanolamine + CO2. The protein operates within phospholipid metabolism; phosphatidylethanolamine biosynthesis; phosphatidylethanolamine from CDP-diacylglycerol: step 2/2. Its function is as follows. Catalyzes the formation of phosphatidylethanolamine (PtdEtn) from phosphatidylserine (PtdSer). The polypeptide is Phosphatidylserine decarboxylase proenzyme (Ehrlichia ruminantium (strain Gardel)).